The sequence spans 85 residues: Progonadoliberin-2 (85 aa).

The N-terminal stretch at 1 to 23 is a signal peptide; it reads MCVSRLVLLFGLLLCVGAQLSNA. Glutamine 24 is modified (pyrrolidone carboxylic acid). Glycine 33 carries the glycine amide modification.

The protein belongs to the GnRH family.

The protein localises to the secreted. Its function is as follows. Stimulates the secretion of gonadotropins. The protein is Progonadoliberin-2 (gnrh2) of Morone saxatilis (Striped bass).